A 225-amino-acid chain; its full sequence is Protein-L-isoaspartate O-methyltransferase (225 aa).

Serine 75 is an active-site residue.

This sequence belongs to the methyltransferase superfamily. L-isoaspartyl/D-aspartyl protein methyltransferase family.

The protein localises to the cytoplasm. The enzyme catalyses [protein]-L-isoaspartate + S-adenosyl-L-methionine = [protein]-L-isoaspartate alpha-methyl ester + S-adenosyl-L-homocysteine. Its function is as follows. Catalyzes the methyl esterification of L-isoaspartyl residues in peptides and proteins that result from spontaneous decomposition of normal L-aspartyl and L-asparaginyl residues. It plays a role in the repair and/or degradation of damaged proteins. The chain is Protein-L-isoaspartate O-methyltransferase from Xanthomonas euvesicatoria pv. vesicatoria (strain 85-10) (Xanthomonas campestris pv. vesicatoria).